We begin with the raw amino-acid sequence, 275 residues long: Diaminopimelate epimerase (275 aa).

Residues Asn12, Gln45, and Asn65 each contribute to the substrate site. Catalysis depends on Cys74, which acts as the Proton donor. Substrate contacts are provided by residues 75–76 (GN), Asn158, Asn191, and 209–210 (ER). Cys218 (proton acceptor) is an active-site residue. 219–220 (GT) is a binding site for substrate.

The protein belongs to the diaminopimelate epimerase family. In terms of assembly, homodimer.

It is found in the cytoplasm. The enzyme catalyses (2S,6S)-2,6-diaminopimelate = meso-2,6-diaminopimelate. Its pathway is amino-acid biosynthesis; L-lysine biosynthesis via DAP pathway; DL-2,6-diaminopimelate from LL-2,6-diaminopimelate: step 1/1. Catalyzes the stereoinversion of LL-2,6-diaminopimelate (L,L-DAP) to meso-diaminopimelate (meso-DAP), a precursor of L-lysine and an essential component of the bacterial peptidoglycan. This chain is Diaminopimelate epimerase, found in Shewanella denitrificans (strain OS217 / ATCC BAA-1090 / DSM 15013).